A 761-amino-acid polypeptide reads, in one-letter code: MNFSSIFKSISNFQFPYTIEETAITETALWQCFDGTRKADSLPVTVFKAKRSPENESLILNAVHKSKILKIPGLCTVLETFDSDPQSTFIVTERVVPFPWDNLGSLSQNKFGVELGISQLLATLGFLKNFVLGTLSKDSVFINIKGEWVLFGLELCSSKEGLSAFEFASRARSYYNIIGSQLPCEDPNTIDSMGLGLLIKSLMAPSCLPKDWIVNVNMISDGKITIENFRKRLENTETWRSNPLINFYQELRELHIKDPQGKLVVMSNLENLYLESREIFRNLTPGMIENFIIPELCEIIKLLMTQSISSAASPIGMNFNASHKLVPFLAIVLDLTSETNTFPVGFNDLITQSFKLPDRQVRFLLLIYLPKLIGPLSKSEISSRIYPHFIQGLTDSDATLRLQTLKTIPCIVSCLTERQLNNELLRFLAKTQVDSDVEIRTWTVIIISKISTILSTSVGNRSNILATAFTKSLKDPQVKPRLAALYGLEKSIELFDVNTIANKILTVIAPGLLDKSPIVRGRAKILFEEYLEKLEKEAQLIQTNDSTADSEDVKDIDFENYGCDEEDMNKEDNLLAAQFLNNLRLNSPSATTPSNITESEIDSAQDGSGWDDLSDTDGFITNGTTESFDETTNPVTTASTPKLFGKPIKINKSWNDELNDDGWIQDESGPSKVPQKHTRPQNSTLAKSIAPSSRLSIKKKKTTILAPRNIASNSTVTTKSSLSNKTARSKPISSIRGSVTKKGNVDGWDDDGDSDSWDTNW.

HEAT repeat units follow at residues Ile385–Glu423 and Asn498–Leu534. 2 disordered regions span residues Asp660–Ser692 and Ser714–Trp761. Composition is skewed to polar residues over residues Pro680–Ser692 and Ser714–Gly737. The segment covering Gly747 to Trp761 has biased composition (acidic residues). The residue at position 754 (Ser754) is a Phosphoserine.

Associates with the nuclear pore complex (NPC). Interacts with GSP1, LOS1, MSN5, NUP116 and TEF2.

It is found in the cytoplasm. Component of the nuclear tRNA export machinery that my collect tRNA from the nuclear tRNA export receptors of the aminoacylation-dependent export and may deliver aminoacylated tRNAs to the translation machinery pathway at the nuclear pore complex. This chain is Cytoplasmic export protein 1 (CEX1), found in Saccharomyces cerevisiae (strain ATCC 204508 / S288c) (Baker's yeast).